We begin with the raw amino-acid sequence, 409 residues long: Failed axon connections homolog (409 aa).

Residues 68-88 (YLTGGALLAAAAYLLHELLVI) traverse the membrane as a helical segment. The interval 372 to 393 (DEGAENSFSRTPDTDFTGHSLF) is disordered.

The protein belongs to the FAX family.

It localises to the membrane. Its function is as follows. May play a role in axonal development. The protein is Failed axon connections homolog (Faxc) of Mus musculus (Mouse).